Consider the following 297-residue polypeptide: Bifunctional protein FolD 2 (297 aa).

Residues 177 to 179 (GKS), I202, and I243 each bind NADP(+).

This sequence belongs to the tetrahydrofolate dehydrogenase/cyclohydrolase family. As to quaternary structure, homodimer.

It carries out the reaction (6R)-5,10-methylene-5,6,7,8-tetrahydrofolate + NADP(+) = (6R)-5,10-methenyltetrahydrofolate + NADPH. The enzyme catalyses (6R)-5,10-methenyltetrahydrofolate + H2O = (6R)-10-formyltetrahydrofolate + H(+). Its pathway is one-carbon metabolism; tetrahydrofolate interconversion. Functionally, catalyzes the oxidation of 5,10-methylenetetrahydrofolate to 5,10-methenyltetrahydrofolate and then the hydrolysis of 5,10-methenyltetrahydrofolate to 10-formyltetrahydrofolate. The polypeptide is Bifunctional protein FolD 2 (Rhizorhabdus wittichii (strain DSM 6014 / CCUG 31198 / JCM 15750 / NBRC 105917 / EY 4224 / RW1) (Sphingomonas wittichii)).